The sequence spans 453 residues: Mogroside IIIx synthase (453 aa).

His21 (proton acceptor) is an active-site residue. Catalysis depends on Asp122, which acts as the Charge relay. Residues Ser273, Gln336, Trp354, Asn355, Ser356, Glu359, Asp375, and Gln376 each coordinate UDP-alpha-D-glucose.

This sequence belongs to the UDP-glycosyltransferase family. In terms of tissue distribution, highly expressed in mature fruits.

It catalyses the reaction mogroside IIE + UDP-alpha-D-glucose = mogroside IIIX + UDP + H(+). The enzyme catalyses mogroside III + UDP-alpha-D-glucose = mogroside IV + UDP + H(+). It carries out the reaction mogroside III + UDP-alpha-D-glucose = siamenoside I + UDP + H(+). The catalysed reaction is mogroside IV + UDP-alpha-D-glucose = mogroside V + UDP + H(+). It participates in secondary metabolite biosynthesis; terpenoid biosynthesis. Functionally, UDP-glycosyltransferase involved in the biosynthesis of cucurbitacin and mogroside tetracyclic triterpene natural products (e.g. siamenoside I and mogrosides IV, V and VI). Cucurbitacins have cytotoxic properties and exhibit deterrent taste as a defense barrier against herbivores. Mogrosides are nonsugar highly oxygenated compounds used as high-intensity zero-calorie sweeteners; they also possess pharmacological properties such as regulating immunity, lowering blood sugar and lipid levels, protecting the liver, and acting as antioxidants and antitumor agents. Catalyzes the branched glucosylations of mogroside II-E, mogroside III and mogroside IV. This Siraitia grosvenorii (Monk's fruit) protein is Mogroside IIIx synthase.